Consider the following 65-residue polypeptide: Large ribosomal subunit protein bL28 (65 aa).

It belongs to the bacterial ribosomal protein bL28 family.

This Bifidobacterium animalis subsp. lactis (strain AD011) protein is Large ribosomal subunit protein bL28.